Here is a 236-residue protein sequence, read N- to C-terminus: Small ribosomal subunit protein uS3 (236 aa).

One can recognise a KH type-2 domain in the interval 39 to 107 (IREILHKELK…DVVINIVEIR (69 aa)). Positions 213–236 (MAQDKRMNEGGGESSQPRSRRDAA) are disordered.

It belongs to the universal ribosomal protein uS3 family. In terms of assembly, part of the 30S ribosomal subunit. Forms a tight complex with proteins S10 and S14.

Its function is as follows. Binds the lower part of the 30S subunit head. Binds mRNA in the 70S ribosome, positioning it for translation. This chain is Small ribosomal subunit protein uS3, found in Bradyrhizobium sp. (strain BTAi1 / ATCC BAA-1182).